Reading from the N-terminus, the 503-residue chain is Lysine--tRNA ligase (503 aa).

Mg(2+) is bound by residues glutamate 413 and glutamate 420.

Belongs to the class-II aminoacyl-tRNA synthetase family. Homodimer. Requires Mg(2+) as cofactor.

Its subcellular location is the cytoplasm. The enzyme catalyses tRNA(Lys) + L-lysine + ATP = L-lysyl-tRNA(Lys) + AMP + diphosphate. The polypeptide is Lysine--tRNA ligase (Mannheimia succiniciproducens (strain KCTC 0769BP / MBEL55E)).